A 344-amino-acid polypeptide reads, in one-letter code: tRNA N6-adenosine threonylcarbamoyltransferase (344 aa).

Fe cation contacts are provided by His119 and His123. Substrate is bound by residues 141–145 (VVSGG), Asp174, Gly187, Asp191, and Asn280. Residue Asp310 coordinates Fe cation.

This sequence belongs to the KAE1 / TsaD family. Fe(2+) is required as a cofactor.

Its subcellular location is the cytoplasm. It catalyses the reaction L-threonylcarbamoyladenylate + adenosine(37) in tRNA = N(6)-L-threonylcarbamoyladenosine(37) in tRNA + AMP + H(+). Required for the formation of a threonylcarbamoyl group on adenosine at position 37 (t(6)A37) in tRNAs that read codons beginning with adenine. Is involved in the transfer of the threonylcarbamoyl moiety of threonylcarbamoyl-AMP (TC-AMP) to the N6 group of A37, together with TsaE and TsaB. TsaD likely plays a direct catalytic role in this reaction. The polypeptide is tRNA N6-adenosine threonylcarbamoyltransferase (Listeria innocua serovar 6a (strain ATCC BAA-680 / CLIP 11262)).